A 469-amino-acid polypeptide reads, in one-letter code: Glutamate--tRNA ligase (469 aa).

The 'HIGH' region motif lies at 9-19; it reads PSPTGYLHVGG. Zn(2+) is bound by residues Cys-98, Cys-100, Cys-125, and Asp-127. The short motif at 237 to 241 is the 'KMSKS' region element; it reads KLSKR. Residue Lys-240 coordinates ATP.

It belongs to the class-I aminoacyl-tRNA synthetase family. Glutamate--tRNA ligase type 1 subfamily. In terms of assembly, monomer. Requires Zn(2+) as cofactor.

It localises to the cytoplasm. It carries out the reaction tRNA(Glu) + L-glutamate + ATP = L-glutamyl-tRNA(Glu) + AMP + diphosphate. In terms of biological role, catalyzes the attachment of glutamate to tRNA(Glu) in a two-step reaction: glutamate is first activated by ATP to form Glu-AMP and then transferred to the acceptor end of tRNA(Glu). The chain is Glutamate--tRNA ligase from Serratia proteamaculans (strain 568).